The following is a 394-amino-acid chain: NAD(P)H-quinone oxidoreductase subunit H (394 aa).

The protein belongs to the complex I 49 kDa subunit family. In terms of assembly, NDH-1 can be composed of about 15 different subunits; different subcomplexes with different compositions have been identified which probably have different functions.

The protein localises to the cellular thylakoid membrane. It carries out the reaction a plastoquinone + NADH + (n+1) H(+)(in) = a plastoquinol + NAD(+) + n H(+)(out). It catalyses the reaction a plastoquinone + NADPH + (n+1) H(+)(in) = a plastoquinol + NADP(+) + n H(+)(out). In terms of biological role, NDH-1 shuttles electrons from an unknown electron donor, via FMN and iron-sulfur (Fe-S) centers, to quinones in the respiratory and/or the photosynthetic chain. The immediate electron acceptor for the enzyme in this species is believed to be plastoquinone. Couples the redox reaction to proton translocation, and thus conserves the redox energy in a proton gradient. Cyanobacterial NDH-1 also plays a role in inorganic carbon-concentration. The chain is NAD(P)H-quinone oxidoreductase subunit H from Trichodesmium erythraeum (strain IMS101).